Reading from the N-terminus, the 60-residue chain is Protein K12 (60 aa).

The sequence is that of Protein K12 (K12) from Human herpesvirus 8 type P (isolate GK18) (HHV-8).